We begin with the raw amino-acid sequence, 219 residues long: C-8 sterol isomerase erg2 (219 aa).

The chain crosses the membrane as a helical span at residues 1–21; that stretch reads MKLTKFLTVFIPFIAGLIYYI.

Belongs to the ERG2 family.

Its subcellular location is the endoplasmic reticulum membrane. The catalysed reaction is fecosterol = episterol. It participates in steroid metabolism; ergosterol biosynthesis. In terms of biological role, C-8 sterol isomerase; part of the third module of ergosterol biosynthesis pathway that includes by the late steps of the pathway. Erg2 catalyzes the reaction which results in unsaturation at C-7 in the B ring of sterols and thus converts fecosterol to episterol. The third module or late pathway involves the ergosterol synthesis itself through consecutive reactions that mainly occur in the endoplasmic reticulum (ER) membrane. Firstly, the squalene synthase erg9 catalyzes the condensation of 2 farnesyl pyrophosphate moieties to form squalene, which is the precursor of all steroids. Secondly, squalene is converted into lanosterol by the consecutive action of the squalene epoxidase erg1 and the lanosterol synthase erg7. The lanosterol 14-alpha-demethylase erg11/cyp1 catalyzes C14-demethylation of lanosterol to produce 4,4'-dimethyl cholesta-8,14,24-triene-3-beta-ol. In the next steps, a complex process involving various demethylation, reduction and desaturation reactions catalyzed by the C-14 reductase erg24 and the C-4 demethylation complex erg25-erg26-erg27 leads to the production of zymosterol. Erg28 likely functions in the C-4 demethylation complex reaction by tethering erg26 and Erg27 to the endoplasmic reticulum or to facilitate interaction between these proteins. Then, the sterol 24-C-methyltransferase erg6 catalyzes the methyl transfer from S-adenosyl-methionine to the C-24 of zymosterol to form fecosterol. The C-8 sterol isomerase erg2 catalyzes the reaction which results in unsaturation at C-7 in the B ring of sterols and thus converts fecosterol to episterol. The sterol-C5-desaturases erg31 and erg32 then catalyze the introduction of a C-5 double bond in the B ring to produce 5-dehydroepisterol. The C-22 sterol desaturase erg5 further converts 5-dehydroepisterol into ergosta-5,7,22,24(28)-tetraen-3beta-ol by forming the C-22(23) double bond in the sterol side chain. Finally, ergosta-5,7,22,24(28)-tetraen-3beta-ol is substrate of the C-24(28) sterol reductase erg4 to produce ergosterol. In the genus Schizosaccharomyces, a second route exists between lanosterol and fecosterol, via the methylation of lanosterol to eburicol by erg6, followed by C14-demethylation by erg11/cyp1 and C4-demethylation by the demethylation complex erg25-erg26-erg27. The chain is C-8 sterol isomerase erg2 from Schizosaccharomyces pombe (strain 972 / ATCC 24843) (Fission yeast).